A 154-amino-acid polypeptide reads, in one-letter code: MNIFEGNLVSEGLKFGIVVGRFNEFIGGKLLEGAIDGLKRHGVKEEDIDIAWVPGAFEIPLIAKKMAKSPKYDGVICLGAVIKGSTSHYDYVCSEVSKGIASVSLESGKPVIFGVLTTNTIEQAIERAGTKAGNKGYESAVSAIEMANLLNTIG.

Residues phenylalanine 22, 56 to 58 (AFE), and 80 to 82 (AVI) each bind 5-amino-6-(D-ribitylamino)uracil. Residue 85–86 (ST) coordinates (2S)-2-hydroxy-3-oxobutyl phosphate. The Proton donor role is filled by histidine 88. Position 113 (phenylalanine 113) interacts with 5-amino-6-(D-ribitylamino)uracil. Arginine 127 serves as a coordination point for (2S)-2-hydroxy-3-oxobutyl phosphate.

Belongs to the DMRL synthase family.

It carries out the reaction (2S)-2-hydroxy-3-oxobutyl phosphate + 5-amino-6-(D-ribitylamino)uracil = 6,7-dimethyl-8-(1-D-ribityl)lumazine + phosphate + 2 H2O + H(+). Its pathway is cofactor biosynthesis; riboflavin biosynthesis; riboflavin from 2-hydroxy-3-oxobutyl phosphate and 5-amino-6-(D-ribitylamino)uracil: step 1/2. Functionally, catalyzes the formation of 6,7-dimethyl-8-ribityllumazine by condensation of 5-amino-6-(D-ribitylamino)uracil with 3,4-dihydroxy-2-butanone 4-phosphate. This is the penultimate step in the biosynthesis of riboflavin. This chain is 6,7-dimethyl-8-ribityllumazine synthase, found in Clostridium beijerinckii (strain ATCC 51743 / NCIMB 8052) (Clostridium acetobutylicum).